We begin with the raw amino-acid sequence, 304 residues long: Probable WRKY transcription factor 13 (304 aa).

A disordered region spans residues 141-190 (QKNNHGSEIDVDDNDDEVGDGGGINDDDNGRHHHHDTPSRHDKHNTASLG). Acidic residues predominate over residues 149-159 (IDVDDNDDEVG). A DNA-binding region (WRKY) is located at residues 217–282 (SEVDVLDDGY…YEGRHLHSPS (66 aa)).

It belongs to the WRKY group II-c family.

It is found in the nucleus. In terms of biological role, transcription factor. Interacts specifically with the W box (5'-(T)TGAC[CT]-3'), a frequently occurring elicitor-responsive cis-acting element. The sequence is that of Probable WRKY transcription factor 13 (WRKY13) from Arabidopsis thaliana (Mouse-ear cress).